The primary structure comprises 528 residues: Biotin carboxylase 1, chloroplastic (528 aa).

The N-terminal 51 residues, 1-51 (MEATLPVCKSVTSTPGLFMGKTSGIRSSQCSFMMGNKVNFPRQRAQTAHVH), are a transit peptide targeting the chloroplast. ATP is bound by residues lysine 179, lysine 221, 227 to 228 (GG), 263 to 266 (EKYV), and histidine 271. Residues 183-380 (RETMKKAGVP…LIEEQIRVAM (198 aa)) enclose the ATP-grasp domain. Residue lysine 300 participates in hydrogencarbonate binding. Glutamate 338 and glutamate 351 together coordinate ATP. Glutamate 338, glutamate 351, and asparagine 353 together coordinate Mg(2+). Mn(2+) contacts are provided by glutamate 338, glutamate 351, and asparagine 353. 3 residues coordinate hydrogencarbonate: arginine 355, valine 358, and arginine 401. Arginine 355 is a catalytic residue. Arginine 401 serves as a coordination point for biotin.

Acetyl-CoA carboxylase is a heterohexamer composed of biotin carboxyl carrier protein, biotin carboxylase and two subunits each of ACCase subunit alpha and ACCase plastid-coded subunit beta (accD). The cofactor is Mg(2+). It depends on Mn(2+) as a cofactor.

The protein resides in the plastid. It localises to the chloroplast. It catalyses the reaction N(6)-biotinyl-L-lysyl-[protein] + hydrogencarbonate + ATP = N(6)-carboxybiotinyl-L-lysyl-[protein] + ADP + phosphate + H(+). Its pathway is lipid metabolism; malonyl-CoA biosynthesis; malonyl-CoA from acetyl-CoA: step 1/1. In terms of biological role, this protein is a component of the acetyl coenzyme A carboxylase complex; first, biotin carboxylase catalyzes the carboxylation of the carrier protein and then the transcarboxylase transfers the carboxyl group to form malonyl-CoA. The protein is Biotin carboxylase 1, chloroplastic of Populus trichocarpa (Western balsam poplar).